We begin with the raw amino-acid sequence, 264 residues long: Aminoglycoside 3'-phosphotransferase (264 aa).

The active-site Proton acceptor is D190.

The protein belongs to the aminoglycoside phosphotransferase family.

It catalyses the reaction kanamycin A + ATP = kanamycin 3'-phosphate + ADP + H(+). Its function is as follows. Resistance to kanamycin and structurally-related aminoglycosides, including amikacin. The polypeptide is Aminoglycoside 3'-phosphotransferase (aphA) (Enterococcus faecalis (Streptococcus faecalis)).